Here is a 322-residue protein sequence, read N- to C-terminus: Phospho-N-acetylmuramoyl-pentapeptide-transferase (322 aa).

The next 10 membrane-spanning stretches (helical) occupy residues 10 to 30 (YTAL…IPML), 51 to 71 (NGTP…TGLT), 79 to 99 (MAVG…DDFI), 107 to 127 (LGLK…YVAF), 146 to 166 (FVIN…VAIV), 178 to 198 (LASG…SSIA), 203 to 223 (VAVL…FNSY), 227 to 247 (VFMG…FSVL), 250 to 270 (SVLI…SVLI), and 302 to 322 (VVFI…IAVF).

Belongs to the glycosyltransferase 4 family. MraY subfamily. Mg(2+) serves as cofactor.

The protein resides in the cell membrane. It carries out the reaction UDP-N-acetyl-alpha-D-muramoyl-L-alanyl-gamma-D-glutamyl-meso-2,6-diaminopimeloyl-D-alanyl-D-alanine + di-trans,octa-cis-undecaprenyl phosphate = di-trans,octa-cis-undecaprenyl diphospho-N-acetyl-alpha-D-muramoyl-L-alanyl-D-glutamyl-meso-2,6-diaminopimeloyl-D-alanyl-D-alanine + UMP. It functions in the pathway cell wall biogenesis; peptidoglycan biosynthesis. Catalyzes the initial step of the lipid cycle reactions in the biosynthesis of the cell wall peptidoglycan: transfers peptidoglycan precursor phospho-MurNAc-pentapeptide from UDP-MurNAc-pentapeptide onto the lipid carrier undecaprenyl phosphate, yielding undecaprenyl-pyrophosphoryl-MurNAc-pentapeptide, known as lipid I. The sequence is that of Phospho-N-acetylmuramoyl-pentapeptide-transferase from Clostridioides difficile (strain 630) (Peptoclostridium difficile).